The primary structure comprises 867 residues: Coiled-coil domain-containing protein 178 (867 aa).

4 coiled-coil regions span residues 153-204 (DEKC…KIDS), 233-414 (WHLE…ENQY), 445-470 (ACTK…TNES), and 662-696 (MIFY…KNKF).

This is Coiled-coil domain-containing protein 178 (CCDC178) from Homo sapiens (Human).